Here is a 248-residue protein sequence, read N- to C-terminus: Metallo-beta-lactamase type 2 (248 aa).

The signal sequence occupies residues 1 to 21 (MKGLKGLLVLALGFTGLQVFG). Residues His97, His99, Asp101, His160, and Cys179 each contribute to the Zn(2+) site. Lys182 serves as a coordination point for substrate. Zn(2+) is bound at residue His221.

This sequence belongs to the metallo-beta-lactamase superfamily. Class-B beta-lactamase family. In terms of assembly, monomer. Requires Zn(2+) as cofactor.

It localises to the periplasm. It catalyses the reaction a beta-lactam + H2O = a substituted beta-amino acid. Its function is as follows. Confers resistance to the different beta-lactams antibiotics (penicillin, cephalosporin and carbapenem) via the hydrolysis of the beta-lactam ring. This chain is Metallo-beta-lactamase type 2 (blaB8), found in Elizabethkingia meningoseptica (Chryseobacterium meningosepticum).